A 1272-amino-acid chain; its full sequence is Ubiquitin carboxyl-terminal hydrolase 2 (1272 aa).

One can recognise a USP domain in the interval 736 to 1258 (TGINNIGNTC…TPYFLVYVKQ (523 aa)). C745 acts as the Nucleophile in catalysis. Residues 884-918 (DGLNGDVGTDANRKKNESNDAEVSENEDTTGLTSP) form a disordered region. Acidic residues predominate over residues 902-911 (NDAEVSENED). Phosphoserine is present on S907. H1209 functions as the Proton acceptor in the catalytic mechanism.

It belongs to the peptidase C19 family. In terms of assembly, forms a ternary complex with RSP5 and RUP1. Interacts with RSP5. Interacts with FZO1.

It carries out the reaction Thiol-dependent hydrolysis of ester, thioester, amide, peptide and isopeptide bonds formed by the C-terminal Gly of ubiquitin (a 76-residue protein attached to proteins as an intracellular targeting signal).. In terms of biological role, has an ATP-independent isopeptidase activity, cleaving at the C-terminus of the ubiquitin moiety in natural or engineered linear fusion proteins, irrespective of their size or the presence of an N-terminal extension to ubiquitin. Hydrolyzes polyubiquitinated 'Lys-63' polyubiquitin chains in RPO21, producing mono-ubiquitinated RNA polymerase II. Removes ubiquitin chains that initiate proteolysis of FZO1 and inhibit mitochondrial fusion. In Saccharomyces cerevisiae (strain ATCC 204508 / S288c) (Baker's yeast), this protein is Ubiquitin carboxyl-terminal hydrolase 2 (UBP2).